A 546-amino-acid chain; its full sequence is Sulfite oxidase, mitochondrial (546 aa).

The N-terminal 80 residues, 1–80 (MLLQLYRSVV…YHEHRCRASQ (80 aa)), are a transit peptide targeting the mitochondrion. The region spanning 83-162 (PRMYSKEDVR…LAEYKIGELN (80 aa)) is the Cytochrome b5 heme-binding domain. His-119 provides a ligand contact to heme b. Ser-124 is subject to Phosphoserine. 3 residues coordinate heme b: His-144, Gln-146, and His-148. Residues 166 to 175 (SMSPSVEASD) are hinge. A moco domain region spans residues 176 to 402 (PYADDPIRHP…YSHWQRRDYK (227 aa)). Mo-molybdopterin-binding positions include 216–220 (FTRNH), Cys-265, Asp-323, His-362, Arg-367, and 378–380 (HVK). The homodimerization stretch occupies residues 403–539 (GFSPSVDWDT…RGVLSNAWHR (137 aa)).

Homodimer. The cofactor is heme b. Mo-molybdopterin serves as cofactor.

Its subcellular location is the mitochondrion intermembrane space. It catalyses the reaction sulfite + O2 + H2O = sulfate + H2O2. The protein operates within energy metabolism; sulfur metabolism. In terms of biological role, catalyzes the oxidation of sulfite to sulfate, the terminal reaction in the oxidative degradation of sulfur-containing amino acids. This is Sulfite oxidase, mitochondrial (Suox) from Mus musculus (Mouse).